Here is a 502-residue protein sequence, read N- to C-terminus: Probable cytochrome P450 6a23 (502 aa).

Cys-445 provides a ligand contact to heme.

Belongs to the cytochrome P450 family. It depends on heme as a cofactor.

The protein resides in the endoplasmic reticulum membrane. It is found in the microsome membrane. Functionally, may be involved in the metabolism of insect hormones and in the breakdown of synthetic insecticides. This is Probable cytochrome P450 6a23 (Cyp6a23) from Drosophila melanogaster (Fruit fly).